Consider the following 238-residue polypeptide: tRNA1(Val) (adenine(37)-N6)-methyltransferase (238 aa).

Belongs to the methyltransferase superfamily. tRNA (adenine-N(6)-)-methyltransferase family.

It is found in the cytoplasm. It carries out the reaction adenosine(37) in tRNA1(Val) + S-adenosyl-L-methionine = N(6)-methyladenosine(37) in tRNA1(Val) + S-adenosyl-L-homocysteine + H(+). Its function is as follows. Specifically methylates the adenine in position 37 of tRNA(1)(Val) (anticodon cmo5UAC). The sequence is that of tRNA1(Val) (adenine(37)-N6)-methyltransferase from Shewanella baltica (strain OS185).